The following is a 169-amino-acid chain: Peptide deformylase (169 aa).

Residues Cys91 and His133 each coordinate Fe cation. Glu134 is an active-site residue. Residue His137 participates in Fe cation binding.

Belongs to the polypeptide deformylase family. Fe(2+) serves as cofactor.

The enzyme catalyses N-terminal N-formyl-L-methionyl-[peptide] + H2O = N-terminal L-methionyl-[peptide] + formate. Its function is as follows. Removes the formyl group from the N-terminal Met of newly synthesized proteins. Requires at least a dipeptide for an efficient rate of reaction. N-terminal L-methionine is a prerequisite for activity but the enzyme has broad specificity at other positions. The protein is Peptide deformylase of Salmonella typhi.